Reading from the N-terminus, the 128-residue chain is Histone H2A (128 aa).

It belongs to the histone H2A family. As to quaternary structure, the nucleosome is a histone octamer containing two molecules each of H2A, H2B, H3 and H4 assembled in one H3-H4 heterotetramer and two H2A-H2B heterodimers. The octamer wraps approximately 147 bp of DNA.

It localises to the nucleus. It is found in the chromosome. Core component of nucleosome. Nucleosomes wrap and compact DNA into chromatin, limiting DNA accessibility to the cellular machineries which require DNA as a template. Histones thereby play a central role in transcription regulation, DNA repair, DNA replication and chromosomal stability. DNA accessibility is regulated via a complex set of post-translational modifications of histones, also called histone code, and nucleosome remodeling. This chain is Histone H2A (HTA1), found in Encephalitozoon cuniculi (strain GB-M1) (Microsporidian parasite).